We begin with the raw amino-acid sequence, 177 residues long: uncharacterized protein (177 aa).

This is an uncharacterized protein from Acanthamoeba polyphaga (Amoeba).